Here is a 529-residue protein sequence, read N- to C-terminus: Bifunctional purine biosynthesis protein PurH (529 aa).

One can recognise an MGS-like domain in the interval M1 to V148.

The protein belongs to the PurH family.

It carries out the reaction (6R)-10-formyltetrahydrofolate + 5-amino-1-(5-phospho-beta-D-ribosyl)imidazole-4-carboxamide = 5-formamido-1-(5-phospho-D-ribosyl)imidazole-4-carboxamide + (6S)-5,6,7,8-tetrahydrofolate. The catalysed reaction is IMP + H2O = 5-formamido-1-(5-phospho-D-ribosyl)imidazole-4-carboxamide. It participates in purine metabolism; IMP biosynthesis via de novo pathway; 5-formamido-1-(5-phospho-D-ribosyl)imidazole-4-carboxamide from 5-amino-1-(5-phospho-D-ribosyl)imidazole-4-carboxamide (10-formyl THF route): step 1/1. The protein operates within purine metabolism; IMP biosynthesis via de novo pathway; IMP from 5-formamido-1-(5-phospho-D-ribosyl)imidazole-4-carboxamide: step 1/1. This Salmonella typhi protein is Bifunctional purine biosynthesis protein PurH.